The primary structure comprises 270 residues: NAD kinase (270 aa).

Residue D61 is the Proton acceptor of the active site. NAD(+)-binding positions include 61–62 (DG), 133–134 (NE), R144, R163, D165, and 176–181 (TAYNLS).

Belongs to the NAD kinase family. A divalent metal cation serves as cofactor.

The protein localises to the cytoplasm. It carries out the reaction NAD(+) + ATP = ADP + NADP(+) + H(+). Involved in the regulation of the intracellular balance of NAD and NADP, and is a key enzyme in the biosynthesis of NADP. Catalyzes specifically the phosphorylation on 2'-hydroxyl of the adenosine moiety of NAD to yield NADP. The chain is NAD kinase from Natronomonas pharaonis (strain ATCC 35678 / DSM 2160 / CIP 103997 / JCM 8858 / NBRC 14720 / NCIMB 2260 / Gabara) (Halobacterium pharaonis).